We begin with the raw amino-acid sequence, 260 residues long: Phosphate import ATP-binding protein PstB (260 aa).

The 242-residue stretch at 14 to 255 (IETENLSLFY…PKNTKTEEYI (242 aa)) folds into the ABC transporter domain. 46-53 (GPSGCGKS) contributes to the ATP binding site.

It belongs to the ABC transporter superfamily. Phosphate importer (TC 3.A.1.7) family. As to quaternary structure, the complex is composed of two ATP-binding proteins (PstB), two transmembrane proteins (PstC and PstA) and a solute-binding protein (PstS).

The protein resides in the cell inner membrane. It catalyses the reaction phosphate(out) + ATP + H2O = ADP + 2 phosphate(in) + H(+). Functionally, part of the ABC transporter complex PstSACB involved in phosphate import. Responsible for energy coupling to the transport system. This chain is Phosphate import ATP-binding protein PstB, found in Borrelia garinii subsp. bavariensis (strain ATCC BAA-2496 / DSM 23469 / PBi) (Borreliella bavariensis).